Consider the following 435-residue polypeptide: Bystin (435 aa).

The interval 1 to 102 is disordered; that stretch reads MPKFKAARGA…VPQDGSDDEE (102 aa). Arg40 is modified (omega-N-methylarginine). A compositionally biased stretch (basic and acidic residues) spans 71–87; that stretch reads AEHGSGDRPAVPRERTT. At Ser98 the chain carries Phosphoserine. At Thr154 the chain carries Phosphothreonine. Phosphoserine is present on residues Ser165 and Ser412.

It belongs to the bystin family. Binds trophinin, tastin and cytokeratins.

The protein resides in the cytoplasm. The protein localises to the nucleus. It localises to the nucleolus. Its function is as follows. Required for processing of 20S pre-rRNA precursor and biogenesis of 40S ribosomal subunits. This is Bystin (BYSL) from Bos taurus (Bovine).